The chain runs to 274 residues: Large ribosomal subunit protein bL28m (274 aa).

The interval 249–274 (SETEEFGLGQEEDLFMKEEPKPTKMA) is disordered. A compositionally biased stretch (basic and acidic residues) spans 262–274 (LFMKEEPKPTKMA).

The protein belongs to the bacterial ribosomal protein bL28 family. As to quaternary structure, component of the mitochondrial large ribosomal subunit (mt-LSU). Mature N.crassa 74S mitochondrial ribosomes consist of a small (37S) and a large (54S) subunit. The 37S small subunit contains a 16S ribosomal RNA (16S mt-rRNA) and 32 different proteins. The 54S large subunit contains a 23S rRNA (23S mt-rRNA) and 42 different proteins.

The protein localises to the mitochondrion. In terms of biological role, component of the mitochondrial ribosome (mitoribosome), a dedicated translation machinery responsible for the synthesis of mitochondrial genome-encoded proteins, including at least some of the essential transmembrane subunits of the mitochondrial respiratory chain. The mitoribosomes are attached to the mitochondrial inner membrane and translation products are cotranslationally integrated into the membrane. The sequence is that of Large ribosomal subunit protein bL28m (mrpl24) from Neurospora crassa (strain ATCC 24698 / 74-OR23-1A / CBS 708.71 / DSM 1257 / FGSC 987).